Here is a 604-residue protein sequence, read N- to C-terminus: BTB/POZ domain-containing protein SR1IP1 (604 aa).

The region spanning 27-96 is the BTB domain; it reads SDVTVHVGEA…CYGINFDMST (70 aa). An NPH3 domain is found at 201 to 474; the sequence is DWWAEDLTVL…VQVLYYEQQR (274 aa). Tyr415 carries the phosphotyrosine modification. Disordered regions lie at residues 478-499 and 532-604; these read EVTN…VLPP and FEKE…HSIS. Positions 500-541 form a coiled coil; sequence KLSSYTDELSKLKRENQDLKLELLKMKMKLKEFEKESEKKTS. The segment covering 541-558 has biased composition (low complexity); sequence SSSTISTNPSSPISTAST. Residues 591 to 604 are compositionally biased toward basic residues; that stretch reads GRTKPPKDRRHSIS.

The protein belongs to the NPH3 family. In terms of assembly, interacts with CAMTA3 and CUL3A.

Its pathway is protein modification; protein ubiquitination. Its function is as follows. Acts as a substrate-specific adapter of an E3 ubiquitin-protein ligase complex (CUL3-RBX1-BTB) which mediates the ubiquitination and subsequent proteasomal degradation of target proteins. Involved in disease resistance. Acts as a substrate adapter that recruits CAMTA3/SR1 for ubiquitination and degradation during pathogen infection. Acts as a positive regulator of plant defense by removing the defense suppressor CAMTA3/SR1. The sequence is that of BTB/POZ domain-containing protein SR1IP1 from Arabidopsis thaliana (Mouse-ear cress).